We begin with the raw amino-acid sequence, 125 residues long: MIHGIGTDIVHIARIRTSLERHGERFAERILAESEREAWRASRDPARFLAKRFAAKEAFGKALGTGVAVPATLHAVAVDHDALGKPLYRYGDGLQTYLDDRRLNAHLSLTDENDYVVAFAVIETR.

Positions 8 and 57 each coordinate Mg(2+).

This sequence belongs to the P-Pant transferase superfamily. AcpS family. Mg(2+) is required as a cofactor.

The protein localises to the cytoplasm. The catalysed reaction is apo-[ACP] + CoA = holo-[ACP] + adenosine 3',5'-bisphosphate + H(+). In terms of biological role, transfers the 4'-phosphopantetheine moiety from coenzyme A to a Ser of acyl-carrier-protein. This chain is Holo-[acyl-carrier-protein] synthase, found in Azoarcus sp. (strain BH72).